The following is a 574-amino-acid chain: K(+)/H(+) antiporter NhaP2 (574 aa).

The next 13 helical transmembrane spans lie at 6–26, 30–50, 58–78, 87–107, 109–129, 173–193, 196–216, 219–239, 242–262, 271–291, 299–319, 335–355, and 359–379; these read INSF…LSPM, LGIP…EDGL, YSTA…DGGM, VALW…TSIT, LMAA…GAIV, IAIL…VSFI, FGLG…LVNL, LAEG…YAVS, LGGS…NKPT, VLDG…GLLL, ILLP…PLAV, WFIS…VFPM, and LPGA…SLLI. The 82-residue stretch at 405–486 folds into the RCK C-terminal domain; the sequence is SGVEIYPSSE…LDALSHLFSQ (82 aa).

The protein belongs to the monovalent cation:proton antiporter 1 (CPA1) transporter (TC 2.A.36) family. NhaP2 subfamily.

The protein localises to the cell inner membrane. The catalysed reaction is K(+)(in) + H(+)(out) = K(+)(out) + H(+)(in). Functionally, k(+)/H(+) antiporter that extrudes potassium in exchange for external protons and maintains the internal concentration of potassium under toxic levels. In Shewanella sp. (strain W3-18-1), this protein is K(+)/H(+) antiporter NhaP2.